The following is a 154-amino-acid chain: UPF0225 protein YPTB2098 (154 aa).

This sequence belongs to the UPF0225 family.

This is UPF0225 protein YPTB2098 from Yersinia pseudotuberculosis serotype I (strain IP32953).